Reading from the N-terminus, the 153-residue chain is Interleukin-4 (153 aa).

An N-terminal signal peptide occupies residues 1 to 24 (MGLTSQLLPPLFFLLACAGNFAHG). 3 disulfides stabilise this stretch: Cys27/Cys151, Cys48/Cys89, and Cys70/Cys123. Residue Asn62 is glycosylated (N-linked (GlcNAc...) asparagine).

This sequence belongs to the IL-4/IL-13 family.

It localises to the secreted. Functionally, participates in at least several B-cell activation processes as well as of other cell types. It is a costimulator of DNA-synthesis. It induces the expression of class II MHC molecules on resting B-cells. It enhances both secretion and cell surface expression of IgE and IgG1. It also regulates the expression of the low affinity Fc receptor for IgE (CD23) on both lymphocytes and monocytes. Positively regulates IL31RA expression in macrophages. Stimulates autophagy in dendritic cells by interfering with mTORC1 signaling and through the induction of RUFY4. The chain is Interleukin-4 (IL4) from Cercocebus atys (Sooty mangabey).